Here is a 376-residue protein sequence, read N- to C-terminus: Chaperone protein DnaJ (376 aa).

The region spanning 5-70 (DYYEVLGVAR…NKRRMYDSHG (66 aa)) is the J domain. The CR-type zinc finger occupies 132–209 (GVERRIEIPT…CHGNGRVEED (78 aa)). Residues Cys-145, Cys-148, Cys-161, Cys-164, Cys-183, Cys-186, Cys-197, and Cys-200 each contribute to the Zn(2+) site. CXXCXGXG motif repeat units follow at residues 145–152 (CGDCDGSG), 161–168 (CNVCHGRG), 183–190 (CHNCGGRG), and 197–204 (CKTCHGNG). The tract at residues 223–242 (GDRIRLSGEGEAGPAGTPPG) is disordered.

This sequence belongs to the DnaJ family. Homodimer. The cofactor is Zn(2+).

It localises to the cytoplasm. Participates actively in the response to hyperosmotic and heat shock by preventing the aggregation of stress-denatured proteins and by disaggregating proteins, also in an autonomous, DnaK-independent fashion. Unfolded proteins bind initially to DnaJ; upon interaction with the DnaJ-bound protein, DnaK hydrolyzes its bound ATP, resulting in the formation of a stable complex. GrpE releases ADP from DnaK; ATP binding to DnaK triggers the release of the substrate protein, thus completing the reaction cycle. Several rounds of ATP-dependent interactions between DnaJ, DnaK and GrpE are required for fully efficient folding. Also involved, together with DnaK and GrpE, in the DNA replication of plasmids through activation of initiation proteins. This Stenotrophomonas maltophilia (strain R551-3) protein is Chaperone protein DnaJ.